A 269-amino-acid chain; its full sequence is Eukaryotic translation initiation factor 3 subunit G (269 aa).

Positions 140–181 (AIGGGDMSAQGGSGSGRYVPPSLRAGARDPSSNAYQDQRERD) are disordered. Residues 141 to 154 (IGGGDMSAQGGSGS) show a composition bias toward gly residues. Ser-161 is subject to Phosphoserine. The region spanning 184–263 (KTIRLTQVNE…FMLHAEWSKP (80 aa)) is the RRM domain.

Belongs to the eIF-3 subunit G family. As to quaternary structure, component of the eukaryotic translation initiation factor 3 (eIF-3) complex.

It localises to the cytoplasm. Its function is as follows. RNA-binding component of the eukaryotic translation initiation factor 3 (eIF-3) complex, which is involved in protein synthesis of a specialized repertoire of mRNAs and, together with other initiation factors, stimulates binding of mRNA and methionyl-tRNAi to the 40S ribosome. The eIF-3 complex specifically targets and initiates translation of a subset of mRNAs involved in cell proliferation. This subunit can bind 18S rRNA. The sequence is that of Eukaryotic translation initiation factor 3 subunit G from Kluyveromyces lactis (strain ATCC 8585 / CBS 2359 / DSM 70799 / NBRC 1267 / NRRL Y-1140 / WM37) (Yeast).